The sequence spans 491 residues: Ketol-acid reductoisomerase (NADP(+)) (491 aa).

One can recognise a KARI N-terminal Rossmann domain in the interval 15 to 208 (AQLGKCRFMG…GGHRAGVLES (194 aa)). NADP(+) contacts are provided by residues 45 to 48 (CGAQ), Arg68, Arg76, Ser78, and 108 to 110 (DKQ). His132 is a catalytic residue. Gly158 lines the NADP(+) pocket. KARI C-terminal knotted domains are found at residues 209–344 (SFVA…TAPQ) and 345–484 (FEGK…MTDM). 4 residues coordinate Mg(2+): Asp217, Glu221, Glu389, and Glu393. Ser414 contacts substrate.

This sequence belongs to the ketol-acid reductoisomerase family. Mg(2+) serves as cofactor.

It carries out the reaction (2R)-2,3-dihydroxy-3-methylbutanoate + NADP(+) = (2S)-2-acetolactate + NADPH + H(+). It catalyses the reaction (2R,3R)-2,3-dihydroxy-3-methylpentanoate + NADP(+) = (S)-2-ethyl-2-hydroxy-3-oxobutanoate + NADPH + H(+). It participates in amino-acid biosynthesis; L-isoleucine biosynthesis; L-isoleucine from 2-oxobutanoate: step 2/4. It functions in the pathway amino-acid biosynthesis; L-valine biosynthesis; L-valine from pyruvate: step 2/4. Functionally, involved in the biosynthesis of branched-chain amino acids (BCAA). Catalyzes an alkyl-migration followed by a ketol-acid reduction of (S)-2-acetolactate (S2AL) to yield (R)-2,3-dihydroxy-isovalerate. In the isomerase reaction, S2AL is rearranged via a Mg-dependent methyl migration to produce 3-hydroxy-3-methyl-2-ketobutyrate (HMKB). In the reductase reaction, this 2-ketoacid undergoes a metal-dependent reduction by NADPH to yield (R)-2,3-dihydroxy-isovalerate. The chain is Ketol-acid reductoisomerase (NADP(+)) from Salmonella heidelberg (strain SL476).